We begin with the raw amino-acid sequence, 241 residues long: MKLSEIYNFLDQLSPFNIQESWDNSGILLGDRDSEISTVYLSLDIDENIIKEASENSLIITHHPLIFKGLKDLYDKTYPRAFIKEMIYKNISLISMHTNYDLSHLNTYFTEEILGFKISFKDKFLIYVENSMSFEALCDWVKKKLNLQILRVSDCGKKDIKRIAICTGSGGDLISKVDADCFLSGDFKYHQALEALSNQISLIDLGHFESERYFSQCLAKDLKNLPLQVIITVSKNPFQYF.

Positions 62, 63, 101, 207, and 211 each coordinate a divalent metal cation.

This sequence belongs to the GTP cyclohydrolase I type 2/NIF3 family. As to quaternary structure, homohexamer.

This Campylobacter jejuni subsp. jejuni serotype O:2 (strain ATCC 700819 / NCTC 11168) protein is GTP cyclohydrolase 1 type 2 homolog.